The sequence spans 523 residues: MNKELLDKVNKRRTFAIISHPDAGKTTITEQMLLLGGVIRSAGTVKARKTGNYATSDWMEIEKKRGISVTSSVMQFEYQGKRINILDTPGHQDFSEDTYRTLMAVDAAVMVIDSARGIEPQTKKLFKVVRQRGIPVFTFMNKLDRDGREPLDLVAELEEVLGIEGVAMNWPIGMGQSLLGLYDLANQRVELYHPEEGQDRFIALADGKAPAGSPLADDPQFEETLGEIELLEGAGASFDRAKVLAGQQTPVFFGSALTNFGVETFLEQFVDLAPAPGEHEVNGDEELKPDDDEFSGFIFKIQANMNPQHRDRIAFVRVCSGEFSKGLDVTLARTGKQVRLNNAVEFESSARVQVSEAVAGDIVGLYDTGNFQIGDSVYAGKRKLEFPPLPEFTPELFMRVSPKNVMKQKSFHKGMNQLVQEGAVQLYRNYQTDDYILGAVGQLQFEVFQYRMKNEYNSEVEMTSIGHRVARWINPDQLDPKMSSSRNLLVKDRFGNPLFLFENAFAERWFHDKYPDVELTEKL.

The 268-residue stretch at 10-277 (NKRRTFAIIS…QFVDLAPAPG (268 aa)) folds into the tr-type G domain. Residues 19–26 (SHPDAGKT), 87–91 (DTPGH), and 141–144 (NKLD) each bind GTP.

The protein belongs to the TRAFAC class translation factor GTPase superfamily. Classic translation factor GTPase family. PrfC subfamily.

It is found in the cytoplasm. Its function is as follows. Increases the formation of ribosomal termination complexes and stimulates activities of RF-1 and RF-2. It binds guanine nucleotides and has strong preference for UGA stop codons. It may interact directly with the ribosome. The stimulation of RF-1 and RF-2 is significantly reduced by GTP and GDP, but not by GMP. This chain is Peptide chain release factor 3, found in Lactobacillus delbrueckii subsp. bulgaricus (strain ATCC BAA-365 / Lb-18).